A 387-amino-acid chain; its full sequence is GTPase Obg (387 aa).

The Obg domain occupies 1–159; sequence MKFLDEAKIY…MWVRLEMKLL (159 aa). The OBG-type G domain maps to 160 to 334; that stretch reads ADVGLVGMPN…LVYHVGGMVK (175 aa). Residues 166–173, 191–195, 213–216, 283–286, and 315–317 each bind GTP; these read GMPNAGKS, FTTLQ, DIPG, SKAD, and SSA. Mg(2+)-binding residues include Ser-173 and Thr-193. Positions 347 to 379 are disordered; sequence LEDAPTRAGSKALRDEHAPSWQDDDDDDDDDDG. Residues 368 to 379 show a composition bias toward acidic residues; it reads QDDDDDDDDDDG.

This sequence belongs to the TRAFAC class OBG-HflX-like GTPase superfamily. OBG GTPase family. As to quaternary structure, monomer. The cofactor is Mg(2+).

The protein localises to the cytoplasm. An essential GTPase which binds GTP, GDP and possibly (p)ppGpp with moderate affinity, with high nucleotide exchange rates and a fairly low GTP hydrolysis rate. Plays a role in control of the cell cycle, stress response, ribosome biogenesis and in those bacteria that undergo differentiation, in morphogenesis control. In Magnetococcus marinus (strain ATCC BAA-1437 / JCM 17883 / MC-1), this protein is GTPase Obg.